We begin with the raw amino-acid sequence, 328 residues long: Acyl-CoA wax alcohol acyltransferase 1 (328 aa).

2 consecutive transmembrane segments (helical) span residues S12–L32 and V34–F53.

This sequence belongs to the diacylglycerol acyltransferase family. Predominantly expressed in skin, where it is limited to the sebaceous gland. Expressed in more mature, centrally located cells just before their rupture and sebum release. Also expressed in all tissues except spleen. Expressed at higher level in thymus, prostate and testis.

It localises to the endoplasmic reticulum membrane. It carries out the reaction a long chain fatty alcohol + a fatty acyl-CoA = a wax ester + CoA. It catalyses the reaction 1,2-di-(9Z-octadecenoyl)-sn-glycerol + (9Z)-octadecenoyl-CoA = 1,2,3-tri-(9Z-octadecenoyl)-glycerol + CoA. The catalysed reaction is hexadecan-1-ol + (9Z)-octadecenoyl-CoA = hexadecanyl (9Z)-octadecenoate + CoA. The enzyme catalyses decan-1-ol + (9Z)-octadecenoyl-CoA = 1-O-decyl-(9Z)-octadecenoate + CoA. It carries out the reaction (9Z)-hexadecen-1-ol + (9Z)-octadecenoyl-CoA = 1-O-(9Z)-hexadecenyl (9Z)-octadecenoate + CoA. It catalyses the reaction octadecan-1-ol + (9Z)-octadecenoyl-CoA = 1-O-octadecyl (9Z)-octadecenoate + CoA. The catalysed reaction is (9Z)-octadecen-1-ol + (9Z)-octadecenoyl-CoA = 1-O-(9Z)-octadecenyl (9Z)-octadecenoate + CoA. The enzyme catalyses hexadecan-1-ol + hexadecanoyl-CoA = hexadecanyl hexadecanoate + CoA. It carries out the reaction hexadecan-1-ol + (9Z)-hexadecenoyl-CoA = 1-O-hexadecyl (9Z)-hexadecenoate + CoA. It catalyses the reaction hexadecan-1-ol + octadecanoyl-CoA = hexadecanyl octadecanoate + CoA. The catalysed reaction is eicosan-1-ol + (9Z)-octadecenoyl-CoA = 1-O-eicosanyl (9Z)-octadecenoate + CoA. In terms of biological role, acyltransferase that catalyzes the formation of ester bonds between fatty alcohols and fatty acyl-CoAs to form wax monoesters. Shows a strong preference for decyl alcohol (C10), with less activity towards C16 and C18 alcohols. Shows a strong preference for saturated acyl-CoAs. This is Acyl-CoA wax alcohol acyltransferase 1 (AWAT1) from Homo sapiens (Human).